Consider the following 1759-residue polypeptide: Protein TIC 214 (1759 aa).

5 consecutive transmembrane segments (helical) span residues 23–45 (VVVG…LFLL), 64–84 (FITG…HLAL), 129–149 (IFFQ…SSIF), 172–192 (IGWI…LICI), and 221–241 (IFVV…PPPF).

Belongs to the TIC214 family. In terms of assembly, part of the Tic complex.

The protein localises to the plastid. It is found in the chloroplast inner membrane. In terms of biological role, involved in protein precursor import into chloroplasts. May be part of an intermediate translocation complex acting as a protein-conducting channel at the inner envelope. The chain is Protein TIC 214 from Phaseolus vulgaris (Kidney bean).